Here is a 320-residue protein sequence, read N- to C-terminus: MGTPFKMERGVKYRDAAKTSIIPVKNIDPNQELLKKPEWMKIKLPANSAKIESIKNGMRRHGLHSVCEEASCPNLHECFNHGTATFMIMGAICTRRCPFCDVAHGKPLPLDKDEPKKLAETIQDMKLKYVVITSVDRDDLPDRGAGHFAECVKEIRALNPGIKIEILVPDFRGRVEQAIEILKENPPDVFNHNLENVPRLYKEIRPGADYEWSLKLLKEFKAVFPDIPTKSGIMVGLGETNEEILQVMQDLRDHGVTMLTLGQYLQPSRHHLPVARYVHPTEFDMFREKANEMGFEHAACGPFVRSSYHADLQASGGLVK.

Positions 67, 72, 78, 93, 97, 100, and 307 each coordinate [4Fe-4S] cluster. The Radical SAM core domain occupies 79 to 296; the sequence is FNHGTATFMI…REKANEMGFE (218 aa).

The protein belongs to the radical SAM superfamily. Lipoyl synthase family. It depends on [4Fe-4S] cluster as a cofactor.

The protein localises to the cytoplasm. It carries out the reaction [[Fe-S] cluster scaffold protein carrying a second [4Fe-4S](2+) cluster] + N(6)-octanoyl-L-lysyl-[protein] + 2 oxidized [2Fe-2S]-[ferredoxin] + 2 S-adenosyl-L-methionine + 4 H(+) = [[Fe-S] cluster scaffold protein] + N(6)-[(R)-dihydrolipoyl]-L-lysyl-[protein] + 4 Fe(3+) + 2 hydrogen sulfide + 2 5'-deoxyadenosine + 2 L-methionine + 2 reduced [2Fe-2S]-[ferredoxin]. The protein operates within protein modification; protein lipoylation via endogenous pathway; protein N(6)-(lipoyl)lysine from octanoyl-[acyl-carrier-protein]: step 2/2. In terms of biological role, catalyzes the radical-mediated insertion of two sulfur atoms into the C-6 and C-8 positions of the octanoyl moiety bound to the lipoyl domains of lipoate-dependent enzymes, thereby converting the octanoylated domains into lipoylated derivatives. The chain is Lipoyl synthase from Glaesserella parasuis serovar 5 (strain SH0165) (Haemophilus parasuis).